A 183-amino-acid chain; its full sequence is Inner membrane-spanning protein YciB (183 aa).

Transmembrane regions (helical) follow at residues 10-30, 50-70, 72-92, 118-138, and 148-168; these read LVIFFAVYKLFDIYAASGALI, MHLITFVMVTVFGTLTLVFHD, AFIKWKVTVVYALFAIALAVS, VTWYWVSFFITCALVNIYVAF, and FKVFGLTALTLVNTVITVIYL.

It belongs to the YciB family.

It localises to the cell inner membrane. Plays a role in cell envelope biogenesis, maintenance of cell envelope integrity and membrane homeostasis. This Shewanella sediminis (strain HAW-EB3) protein is Inner membrane-spanning protein YciB.